The sequence spans 790 residues: Phenylalanine--tRNA ligase beta subunit (790 aa).

The region spanning 39–154 (PDSLNTVVTG…ADTPLGESAC (116 aa)) is the tRNA-binding domain. A B5 domain is found at 404–483 (FSPLSLSVRP…FVQKTQKILP (80 aa)). Residues Asp-457, Asp-463, Glu-466, and Glu-467 each coordinate Mg(2+). In terms of domain architecture, FDX-ACB spans 694 to 790 (PIYPASSRDI…KLANIGQGNS (97 aa)).

This sequence belongs to the phenylalanyl-tRNA synthetase beta subunit family. Type 1 subfamily. Tetramer of two alpha and two beta subunits. Mg(2+) is required as a cofactor.

The protein resides in the cytoplasm. It carries out the reaction tRNA(Phe) + L-phenylalanine + ATP = L-phenylalanyl-tRNA(Phe) + AMP + diphosphate + H(+). This chain is Phenylalanine--tRNA ligase beta subunit, found in Chlamydia trachomatis serovar A (strain ATCC VR-571B / DSM 19440 / HAR-13).